Reading from the N-terminus, the 310-residue chain is Succinate dehydrogenase assembly factor 2, mitochondrial (310 aa).

Basic and acidic residues predominate over residues 35–48 (LKDGSDEASPEVKA). The segment at 35–67 (LKDGSDEASPEVKAHRANQANKAPNQFVPNTTS) is disordered. Residues 52–67 (NQANKAPNQFVPNTTS) show a composition bias toward polar residues.

Belongs to the SDHAF2 family. Interacts with the flavoprotein subunit within the SDH catalytic dimer.

It localises to the mitochondrion matrix. Its function is as follows. Plays an essential role in the assembly of succinate dehydrogenase (SDH), an enzyme complex (also referred to as respiratory complex II) that is a component of both the tricarboxylic acid (TCA) cycle and the mitochondrial electron transport chain, and which couples the oxidation of succinate to fumarate with the reduction of ubiquinone (coenzyme Q) to ubiquinol. Required for flavinylation (covalent attachment of FAD) of the flavoprotein subunit of the SDH catalytic dimer. In Penicillium rubens (strain ATCC 28089 / DSM 1075 / NRRL 1951 / Wisconsin 54-1255) (Penicillium chrysogenum), this protein is Succinate dehydrogenase assembly factor 2, mitochondrial.